Reading from the N-terminus, the 215-residue chain is Phosphatidylserine decarboxylase proenzyme (215 aa).

Ser-185 serves as the catalytic Schiff-base intermediate with substrate; via pyruvic acid. A Pyruvic acid (Ser); by autocatalysis modification is found at Ser-185.

This sequence belongs to the phosphatidylserine decarboxylase family. PSD-A subfamily. Heterodimer of a large membrane-associated beta subunit and a small pyruvoyl-containing alpha subunit. Pyruvate is required as a cofactor. Is synthesized initially as an inactive proenzyme. Formation of the active enzyme involves a self-maturation process in which the active site pyruvoyl group is generated from an internal serine residue via an autocatalytic post-translational modification. Two non-identical subunits are generated from the proenzyme in this reaction, and the pyruvate is formed at the N-terminus of the alpha chain, which is derived from the carboxyl end of the proenzyme. The post-translation cleavage follows an unusual pathway, termed non-hydrolytic serinolysis, in which the side chain hydroxyl group of the serine supplies its oxygen atom to form the C-terminus of the beta chain, while the remainder of the serine residue undergoes an oxidative deamination to produce ammonia and the pyruvoyl prosthetic group on the alpha chain.

The protein resides in the cell membrane. It carries out the reaction a 1,2-diacyl-sn-glycero-3-phospho-L-serine + H(+) = a 1,2-diacyl-sn-glycero-3-phosphoethanolamine + CO2. Its pathway is phospholipid metabolism; phosphatidylethanolamine biosynthesis; phosphatidylethanolamine from CDP-diacylglycerol: step 2/2. Catalyzes the formation of phosphatidylethanolamine (PtdEtn) from phosphatidylserine (PtdSer). In Streptomyces avermitilis (strain ATCC 31267 / DSM 46492 / JCM 5070 / NBRC 14893 / NCIMB 12804 / NRRL 8165 / MA-4680), this protein is Phosphatidylserine decarboxylase proenzyme.